The sequence spans 613 residues: TANK-binding kinase 1-binding protein 1 (613 aa).

The tract at residues 1–280 is homodimerization; that stretch reads MESMFEDDIS…QDLASNQSEC (280 aa). The stretch at 48–162 forms a coiled coil; it reads YGDIKERLGG…ALVETHLRQI (115 aa). S184 carries the phosphoserine modification. A coiled-coil region spans residues 218 to 277; that stretch reads TSVSVSELERRRLEEALEAAQGEARGAQLREEQLQAECERLQGELKQLQETRAQDLASNQ. Residues 281 to 330 form an interaction with TBK1 and IKBKE region; it reads GMAWVKRVGDDQVNLALAYTELTEELGRLRELSSLQGRILRTLLQEQARN. Residues 328-457 are disordered; that stretch reads ARNAGQRHSP…HHAKAGFQGR (130 aa). Residues 346–361 show a composition bias toward pro residues; the sequence is PACPSPSPPARPPPCA. Residues 362-372 show a composition bias toward low complexity; the sequence is PCQSPAAQRRS. A phosphoserine mark is found at S365, S372, S379, S385, S400, and S415. Over residues 389 to 406 the composition is skewed to pro residues; sequence PSCPSPVPQRRSPVPPSC. Residues 416–433 are compositionally biased toward pro residues; the sequence is PVPPSCPAPQPRPPPPPG. A phosphoserine mark is found at S502 and S532. The UBZ1-type zinc finger occupies 581–607; the sequence is IRSCPLCQLGFPVGYPDDALIKHIDSH. The Zn(2+) site is built by C584, C587, H603, and H607.

Homodimer. May form a heterodimer with NAP1. Interacts with TKB1 and IKBKE. Weakly interacts with DDX3X.

Functionally, adapter protein which constitutively binds TBK1 and IKBKE playing a role in antiviral innate immunity. Essential for the efficient induction of IRF-dependent transcription following infection with Sendai virus. In Rattus norvegicus (Rat), this protein is TANK-binding kinase 1-binding protein 1.